A 254-amino-acid polypeptide reads, in one-letter code: 3-deoxy-manno-octulosonate cytidylyltransferase (254 aa).

Belongs to the KdsB family.

It localises to the cytoplasm. The catalysed reaction is 3-deoxy-alpha-D-manno-oct-2-ulosonate + CTP = CMP-3-deoxy-beta-D-manno-octulosonate + diphosphate. It functions in the pathway nucleotide-sugar biosynthesis; CMP-3-deoxy-D-manno-octulosonate biosynthesis; CMP-3-deoxy-D-manno-octulosonate from 3-deoxy-D-manno-octulosonate and CTP: step 1/1. It participates in bacterial outer membrane biogenesis; lipopolysaccharide biosynthesis. Activates KDO (a required 8-carbon sugar) for incorporation into bacterial lipopolysaccharide in Gram-negative bacteria. The chain is 3-deoxy-manno-octulosonate cytidylyltransferase from Bordetella parapertussis (strain 12822 / ATCC BAA-587 / NCTC 13253).